The following is a 100-amino-acid chain: Large ribosomal subunit protein uL23 (100 aa).

The protein belongs to the universal ribosomal protein uL23 family. In terms of assembly, part of the 50S ribosomal subunit. Contacts protein L29, and trigger factor when it is bound to the ribosome.

In terms of biological role, one of the early assembly proteins it binds 23S rRNA. One of the proteins that surrounds the polypeptide exit tunnel on the outside of the ribosome. Forms the main docking site for trigger factor binding to the ribosome. The sequence is that of Large ribosomal subunit protein uL23 from Prochlorococcus marinus (strain AS9601).